Here is a 246-residue protein sequence, read N- to C-terminus: Adenosylcobinamide-GDP ribazoletransferase (246 aa).

The next 6 helical transmembrane spans lie at 37–57 (FPAV…AGAL), 64–84 (ALAA…DGLA), 100–122 (LLAV…LQLL), 139–159 (ALVL…WWLM), 185–205 (LAAA…VLWW), and 223–243 (AGIE…GLWI).

This sequence belongs to the CobS family. Requires Mg(2+) as cofactor.

The protein resides in the cell inner membrane. It catalyses the reaction alpha-ribazole + adenosylcob(III)inamide-GDP = adenosylcob(III)alamin + GMP + H(+). The enzyme catalyses alpha-ribazole 5'-phosphate + adenosylcob(III)inamide-GDP = adenosylcob(III)alamin 5'-phosphate + GMP + H(+). The protein operates within cofactor biosynthesis; adenosylcobalamin biosynthesis; adenosylcobalamin from cob(II)yrinate a,c-diamide: step 7/7. Joins adenosylcobinamide-GDP and alpha-ribazole to generate adenosylcobalamin (Ado-cobalamin). Also synthesizes adenosylcobalamin 5'-phosphate from adenosylcobinamide-GDP and alpha-ribazole 5'-phosphate. This Novosphingobium aromaticivorans (strain ATCC 700278 / DSM 12444 / CCUG 56034 / CIP 105152 / NBRC 16084 / F199) protein is Adenosylcobinamide-GDP ribazoletransferase.